A 302-amino-acid polypeptide reads, in one-letter code: RNA polymerase sigma factor RpoH (302 aa).

The segment at 57–126 (LVTSHLRLVA…IQEYILRSWS (70 aa)) is sigma-70 factor domain-2. Positions 81–84 (ELIS) match the Interaction with polymerase core subunit RpoC motif. The sigma-70 factor domain-4 stretch occupies residues 235–286 (AMDKLNDREKHILTERRLSDNPKTLEELSQVYGVSRERVRQIEVRAFDKLQK). Positions 259 to 278 (LEELSQVYGVSRERVRQIEV) form a DNA-binding region, H-T-H motif.

The protein belongs to the sigma-70 factor family. RpoH subfamily. Interacts with the RNA polymerase core enzyme.

Its subcellular location is the cytoplasm. Its function is as follows. Sigma factors are initiation factors that promote the attachment of RNA polymerase to specific initiation sites and are then released. This sigma factor is involved in regulation of expression of heat shock genes. The sequence is that of RNA polymerase sigma factor RpoH from Zymomonas mobilis subsp. mobilis (strain ATCC 31821 / ZM4 / CP4).